The chain runs to 275 residues: NH(3)-dependent NAD(+) synthetase (275 aa).

46 to 53 contacts ATP; sequence GISGGQDS. Residue D52 coordinates Mg(2+). R140 contacts deamido-NAD(+). An ATP-binding site is contributed by T160. Residue E165 coordinates Mg(2+). Deamido-NAD(+) contacts are provided by K173 and D180. Positions 189 and 211 each coordinate ATP. 260-261 provides a ligand contact to deamido-NAD(+); the sequence is HK.

It belongs to the NAD synthetase family. In terms of assembly, homodimer.

The enzyme catalyses deamido-NAD(+) + NH4(+) + ATP = AMP + diphosphate + NAD(+) + H(+). It functions in the pathway cofactor biosynthesis; NAD(+) biosynthesis; NAD(+) from deamido-NAD(+) (ammonia route): step 1/1. Its function is as follows. Catalyzes the ATP-dependent amidation of deamido-NAD to form NAD. Uses ammonia as a nitrogen source. This chain is NH(3)-dependent NAD(+) synthetase, found in Salmonella choleraesuis (strain SC-B67).